The chain runs to 148 residues: Large ribosomal subunit protein uL22c (148 aa).

It belongs to the universal ribosomal protein uL22 family. As to quaternary structure, part of the 50S ribosomal subunit.

It localises to the plastid. Its subcellular location is the chloroplast. Its function is as follows. This protein binds specifically to 23S rRNA. Functionally, the globular domain of the protein is located near the polypeptide exit tunnel on the outside of the subunit, while an extended beta-hairpin is found that lines the wall of the exit tunnel in the center of the 70S ribosome. The protein is Large ribosomal subunit protein uL22c (rpl22) of Zea mays (Maize).